The chain runs to 79 residues: Small ribosomal subunit protein bS21 (79 aa).

The interval 59 to 79 is disordered; it reads RKKMQREGLLPMKPKPVVGVR.

This sequence belongs to the bacterial ribosomal protein bS21 family.

This is Small ribosomal subunit protein bS21 from Methylocella silvestris (strain DSM 15510 / CIP 108128 / LMG 27833 / NCIMB 13906 / BL2).